The following is a 198-amino-acid chain: MDLKKLEGIFEGMLFASGDKVSIEKLSSITGIDKKTVKLVINNMIVKYNNDPSRGITIREINNGYQLCSKPEYYDYIKQLFEPKQRSGLSQAALETLAIIAYNRPITKAKIEQIRGVNSDSAITKLLEKNLIREAGRLDAPGKPVLYETTDEFFRSFGFKSDADLPIFELNDIHETVEINQNSEQEKADTELEKQEKA.

This sequence belongs to the ScpB family. In terms of assembly, homodimer. Homodimerization may be required to stabilize the binding of ScpA to the Smc head domains. Component of a cohesin-like complex composed of ScpA, ScpB and the Smc homodimer, in which ScpA and ScpB bind to the head domain of Smc. The presence of the three proteins is required for the association of the complex with DNA.

It localises to the cytoplasm. Functionally, participates in chromosomal partition during cell division. May act via the formation of a condensin-like complex containing Smc and ScpA that pull DNA away from mid-cell into both cell halves. This is Segregation and condensation protein B from Acetivibrio thermocellus (strain ATCC 27405 / DSM 1237 / JCM 9322 / NBRC 103400 / NCIMB 10682 / NRRL B-4536 / VPI 7372) (Clostridium thermocellum).